The chain runs to 294 residues: Acetylglutamate kinase (294 aa).

Substrate is bound by residues G63–G64, R85, and N188.

This sequence belongs to the acetylglutamate kinase family. ArgB subfamily.

It is found in the cytoplasm. The catalysed reaction is N-acetyl-L-glutamate + ATP = N-acetyl-L-glutamyl 5-phosphate + ADP. It participates in amino-acid biosynthesis; L-arginine biosynthesis; N(2)-acetyl-L-ornithine from L-glutamate: step 2/4. In terms of biological role, catalyzes the ATP-dependent phosphorylation of N-acetyl-L-glutamate. This Methanococcus maripaludis (strain C5 / ATCC BAA-1333) protein is Acetylglutamate kinase.